Here is a 136-residue protein sequence, read N- to C-terminus: Non-structural protein 1 (136 aa).

Belongs to the pneumovirus non-structural protein 1 family. As to quaternary structure, monomer. Homomultimer. Heteromultimer with NS2. Interacts with the matrix protein M. Interacts with host ELOC and CUL2; this interaction allows NS1 to form an active E3 ligase with ELOC and CUL2. Interacts with host IRF3; this interaction leads to the disrupted association of IRF3 with CREBBP and thus reduced binding of IRF3 to the IFN-beta promoter. Interacts with host MAVS; this interaction prevents MAVS binding to RIGI and inhibits signaling pathway leading to interferon production. Interacts with host TRIM25 (via SPRY domain); this interaction suppresses RIGI ubiquitination and results in decreased interaction between RIGI and MAVS.

It is found in the host cytoplasm. The protein localises to the host mitochondrion. Its subcellular location is the host nucleus. Plays a major role in antagonizing the type I IFN-mediated antiviral response by degrading or inhibiting multiple cellular factors required for either IFN induction or response pathways. Acts cooperatively with NS2 to repress activation and nuclear translocation of host IFN-regulatory factor IRF3. Also disrupts the association of IRF3 with CREBBP. Interacts with host mitochondrial-associated membrane (MAM) MAVS and prevents the interaction with RIGI. Interacts with TRIM25 to suppress TRIM25-mediated RIGI ubiquitination and thereby RIGI-MAVS interaction. Together with NS2, participates in the proteasomal degradation of host STAT2, IRF3, IRF7, TBK1 and RIGI through a NS-degradasome involving CUL2 and Elongin-C. The degradasome requires an intact mitochondrial MAVS. Decreases the levels of host TRAF3 and IKBKE/IKK-epsilon. As functions other than disruptions of the type I IFN-mediated antiviral signaling pathways, induces host SOCS1 and SOCS3 expression. Suppresses premature apoptosis by an NF-kappa-B-dependent, interferon-independent mechanism and thus facilitates virus growth. Additionally, NS1 may serve some inhibitory role in viral transcription and RNA replication. Suppresses proliferation and activation of host CD103+ CD8+ cytotoxic T-lymphocytes and Th17 helper T-lymphocytes. This chain is Non-structural protein 1 (1C), found in Bos taurus (Bovine).